A 208-amino-acid polypeptide reads, in one-letter code: Large ribosomal subunit protein uL3 (208 aa).

The segment at 116 to 146 is disordered; that stretch reads GFQGAIKRHGQSRGPMAHGSRYHRRPGSMGP.

It belongs to the universal ribosomal protein uL3 family. In terms of assembly, part of the 50S ribosomal subunit. Forms a cluster with proteins L14 and L19.

In terms of biological role, one of the primary rRNA binding proteins, it binds directly near the 3'-end of the 23S rRNA, where it nucleates assembly of the 50S subunit. The protein is Large ribosomal subunit protein uL3 of Streptococcus mutans serotype c (strain ATCC 700610 / UA159).